The primary structure comprises 50 residues: Small ribosomal subunit protein uS14 (50 aa).

Residues Cys-15, Cys-18, Cys-33, and Cys-36 each contribute to the Zn(2+) site.

The protein belongs to the universal ribosomal protein uS14 family. Zinc-binding uS14 subfamily. Part of the 30S ribosomal subunit. Requires Zn(2+) as cofactor.

In terms of biological role, binds 16S rRNA, required for the assembly of 30S particles. The chain is Small ribosomal subunit protein uS14 from Methanosarcina barkeri (strain Fusaro / DSM 804).